Consider the following 89-residue polypeptide: Small ribosomal subunit protein uS15 (89 aa).

It belongs to the universal ribosomal protein uS15 family. Part of the 30S ribosomal subunit. Forms a bridge to the 50S subunit in the 70S ribosome, contacting the 23S rRNA.

One of the primary rRNA binding proteins, it binds directly to 16S rRNA where it helps nucleate assembly of the platform of the 30S subunit by binding and bridging several RNA helices of the 16S rRNA. Functionally, forms an intersubunit bridge (bridge B4) with the 23S rRNA of the 50S subunit in the ribosome. The chain is Small ribosomal subunit protein uS15 from Mycolicibacterium smegmatis (strain ATCC 700084 / mc(2)155) (Mycobacterium smegmatis).